The sequence spans 204 residues: Recombination protein RecR (204 aa).

Residues Cys-63–Cys-78 form a C4-type zinc finger. The Toprim domain maps to Arg-86 to Pro-181.

The protein belongs to the RecR family.

In terms of biological role, may play a role in DNA repair. It seems to be involved in an RecBC-independent recombinational process of DNA repair. It may act with RecF and RecO. The polypeptide is Recombination protein RecR (Herpetosiphon aurantiacus (strain ATCC 23779 / DSM 785 / 114-95)).